The primary structure comprises 303 residues: Ferrochelatase (303 aa).

2 residues coordinate Fe cation: histidine 185 and glutamate 262.

Belongs to the ferrochelatase family.

It localises to the cytoplasm. The catalysed reaction is heme b + 2 H(+) = protoporphyrin IX + Fe(2+). Its pathway is porphyrin-containing compound metabolism; protoheme biosynthesis; protoheme from protoporphyrin-IX: step 1/1. Catalyzes the ferrous insertion into protoporphyrin IX. The protein is Ferrochelatase of Campylobacter jejuni subsp. doylei (strain ATCC BAA-1458 / RM4099 / 269.97).